A 104-amino-acid chain; its full sequence is Circadian clock oscillator protein KaiB (104 aa).

This sequence belongs to the KaiB family. In terms of assembly, the KaiABC complex composition changes during the circadian cycle to control KaiC phosphorylation. Complexes KaiC(6), KaiA(2-4):KaiC(6), KaiB(6):KaiC(6) and KaiC(6):KaiB(6):KaiA(12) are among the most important forms, many form cooperatively. Undergoes a major conformational rearrangment; in the free state forms homotetramers as a dimer of dimers. When bound to the CI domain of KaiC switches to a monomeric thioredoxin-fold (KaiB(fs)). KaiB(fs) binds CikA, leading it to dephosphorylate phospho-RpaA.

Functionally, key component of the KaiABC oscillator complex, which constitutes the main circadian regulator in cyanobacteria. Complex composition changes during the circadian cycle to control KaiC phosphorylation. KaiA stimulates KaiC autophosphorylation, while KaiB sequesters KaiA, leading to KaiC autodephosphorylation. Phospho-Ser-431 KaiC accumulation triggers binding of KaiB to form the KaiB(6):KaiC(6) complex, leading to changes in output regulators CikA and SasA. KaiB switches to a thioredoxin-like fold (KaiB(fs)) when bound to KaiC. KaiB(6):KaiC(6) formation exposes a site for KaiA binding that sequesters KaiA from KaiC, making the KaiC(6):KaiB(6):KaiA(12) complex that results in KaiC autodephosphorylation. Its function is as follows. A metamorphic protein which reversibly switches between an inactive tetrameric fold and a rare, thioredoxin-like monomeric fold (KaiB(fs)). KaiB(fs) binds phospho-KaiC, KaiA and CikA. KaiA and CikA compete for binding to KaiB(fs), and KaiB(fs) and SasA compete for binding to KaiC, thus the clock oscillator and output signal pathway are tightly coupled. The sequence is that of Circadian clock oscillator protein KaiB from Picosynechococcus sp. (strain ATCC 27264 / PCC 7002 / PR-6) (Agmenellum quadruplicatum).